The chain runs to 154 residues: MHCPFCGAHDTKVIDSRLVAEGDQVRRRRECLACGERFTTFETAELVMPRLIKQDGSRQPFDEDKLRAGMQRALEKRPVSVERLEAAIGHIKHQLRATGEREIKSRVLGELVMAELQKLDEVAYIRFASVYRRFQDLNEFREEIERLAREPAKE.

The segment at Cys3–Cys34 is a zinc-finger region. Residues Pro49 to Glu139 enclose the ATP-cone domain.

It belongs to the NrdR family. Zn(2+) is required as a cofactor.

In terms of biological role, negatively regulates transcription of bacterial ribonucleotide reductase nrd genes and operons by binding to NrdR-boxes. This Pseudomonas aeruginosa (strain LESB58) protein is Transcriptional repressor NrdR.